We begin with the raw amino-acid sequence, 100 residues long: Integration host factor subunit alpha (100 aa).

The tract at residues 53–73 (FDLRDKRQRPGRNPKTGEEIP) is disordered.

The protein belongs to the bacterial histone-like protein family. In terms of assembly, heterodimer of an alpha and a beta chain.

Its function is as follows. This protein is one of the two subunits of integration host factor, a specific DNA-binding protein that functions in genetic recombination as well as in transcriptional and translational control. In Pseudomonas aeruginosa (strain LESB58), this protein is Integration host factor subunit alpha.